Here is a 628-residue protein sequence, read N- to C-terminus: MQLISFLSNPLFFCALLLKFRTIFAACDSSQFECDNGSCISQYDVCNGEKNCPDGSDETALTCVSQRQHCTKPYFQCTYGACVIGTAGCNGVNECADGSDETRLRCGNEDDIRQHDRRLQGNCKENEFKCPSGICLDKSNFLCDGKDDCADGTGFDESVELCGHMECPAYSFKCGTGGCISGSLSCNGENDCYDGSDEAPLLCNTTKKVTTPVVTETPLELLGCPLPLGDERPILTGDGSRVLTGPITRGTVRFSCKQGYVLEGEESSYCAKNKWSTSTIPKCVKYCSTAGEFDGYSTKALCTHNGQQVECRKPFHPPGTEVKFVCSTGFKTLSPLPEMRCMKGGYWNRGRQRCEQDCGQLATPIKQFSSGGYTINNTVVPWHVGLYVWHNEKDYHFQCGGSLLTPDLVITAAHCVYDEGTRLPYSYDTFRVIAAKFYRNYGETTPEEKRRDVRLIEIAPGYKGRTENYYQDLALLTLDEPFELSHVIRPICVTFASFAEKESVTDDVQGKFAGWNIENKHELQFVPAVSKSNSVCRRNLRDIQADKFCIFTQGKSLACQGDSGGGFTSELPTNAFSTWNTARHFLFGVISNAPNADQCAHSLTVMTNIQHFEDMILNAMNRSVETRS.

A signal peptide spans 1–25; that stretch reads MQLISFLSNPLFFCALLLKFRTIFA. LDL-receptor class A domains are found at residues 26–64, 69–107, 122–163, and 166–204; these read ACDSSQFECDNGSCISQYDVCNGEKNCPDGSDETALTCV, HCTKPYFQCTYGACVIGTAGCNGVNECADGSDETRLRCG, NCKE…ELCG, and ECPAYSFKCGTGGCISGSLSCNGENDCYDGSDEAPLLCN. Disulfide bonds link cysteine 27/cysteine 39, cysteine 34/cysteine 52, cysteine 46/cysteine 63, cysteine 70/cysteine 82, cysteine 77/cysteine 95, cysteine 89/cysteine 106, cysteine 123/cysteine 135, cysteine 130/cysteine 149, cysteine 143/cysteine 162, cysteine 167/cysteine 179, cysteine 174/cysteine 192, and cysteine 186/cysteine 203. Asparagine 36 carries an N-linked (GlcNAc...) asparagine glycan. A glycan (N-linked (GlcNAc...) asparagine) is linked at asparagine 204. Sushi domains follow at residues 222 to 285 and 300 to 356; these read LGCP…KCVK and ALCT…RCEQ. 4 disulfides stabilise this stretch: cysteine 224-cysteine 270, cysteine 256-cysteine 283, cysteine 302-cysteine 341, and cysteine 326-cysteine 354. The region spanning 369–621 is the Peptidase S1 domain; it reads SSGGYTINNT…FEDMILNAMN (253 aa). Asparagine 376 carries N-linked (GlcNAc...) asparagine glycosylation. Cysteine 399 and cysteine 415 are joined by a disulfide. Active-site charge relay system residues include histidine 414, aspartate 472, and serine 563. Asparagine 621 carries N-linked (GlcNAc...) asparagine glycosylation.

Belongs to the peptidase S1 family. Post-translationally, may be proteolytically cleaved via an autocatalytic mechanism.

It localises to the secreted. In terms of biological role, serine protease that plays a key role in innate immunity by activating the Toll pathway in response to infection with Gram-positive bacteria and fungi. During Gram-positive infection, acts downstream of PGRP-SA and upstream of Grass and Spz, and therefore appears to function in a pathway that links detection of Gram-positive lysine-type peptidoglycans to Toll activation. Functions in a separate pathway to the psh-mediated activation of the Toll pathway. In Drosophila melanogaster (Fruit fly), this protein is Modular serine protease.